A 176-amino-acid chain; its full sequence is NAD(P)H-quinone oxidoreductase subunit 6, chloroplastic (176 aa).

A run of 5 helical transmembrane segments spans residues 10–30, 32–52, 61–81, 92–112, and 152–172; these read FLLV…VLLP, PIYS…FYIL, AQLL…VMFM, LWTV…VSLI, and FFLP…GAIT.

This sequence belongs to the complex I subunit 6 family. In terms of assembly, NDH is composed of at least 16 different subunits, 5 of which are encoded in the nucleus.

It localises to the plastid. The protein localises to the chloroplast thylakoid membrane. The catalysed reaction is a plastoquinone + NADH + (n+1) H(+)(in) = a plastoquinol + NAD(+) + n H(+)(out). It carries out the reaction a plastoquinone + NADPH + (n+1) H(+)(in) = a plastoquinol + NADP(+) + n H(+)(out). NDH shuttles electrons from NAD(P)H:plastoquinone, via FMN and iron-sulfur (Fe-S) centers, to quinones in the photosynthetic chain and possibly in a chloroplast respiratory chain. The immediate electron acceptor for the enzyme in this species is believed to be plastoquinone. Couples the redox reaction to proton translocation, and thus conserves the redox energy in a proton gradient. In Daucus carota (Wild carrot), this protein is NAD(P)H-quinone oxidoreductase subunit 6, chloroplastic (ndhG).